Consider the following 428-residue polypeptide: 3-phosphoshikimate 1-carboxyvinyltransferase (428 aa).

Positions 22, 23, and 27 each coordinate 3-phosphoshikimate. Residue K22 participates in phosphoenolpyruvate binding. Residues G95 and R123 each coordinate phosphoenolpyruvate. 3-phosphoshikimate-binding residues include S170, S171, Q172, S197, D316, and K343. Position 172 (Q172) interacts with phosphoenolpyruvate. D316 serves as the catalytic Proton acceptor. Residues R347, R390, and K414 each contribute to the phosphoenolpyruvate site.

This sequence belongs to the EPSP synthase family. As to quaternary structure, monomer.

Its subcellular location is the cytoplasm. It carries out the reaction 3-phosphoshikimate + phosphoenolpyruvate = 5-O-(1-carboxyvinyl)-3-phosphoshikimate + phosphate. It participates in metabolic intermediate biosynthesis; chorismate biosynthesis; chorismate from D-erythrose 4-phosphate and phosphoenolpyruvate: step 6/7. In terms of biological role, catalyzes the transfer of the enolpyruvyl moiety of phosphoenolpyruvate (PEP) to the 5-hydroxyl of shikimate-3-phosphate (S3P) to produce enolpyruvyl shikimate-3-phosphate and inorganic phosphate. The chain is 3-phosphoshikimate 1-carboxyvinyltransferase from Laribacter hongkongensis (strain HLHK9).